Consider the following 181-residue polypeptide: MGNMFANLFKGLFGKKEMRILMVGLDAAGKTTILYKLKLGEIVTTIPTIGFNVETVEYKNISFTVWDVGGQDKIRPLWRHYFQNTQGLIFVVDSNDRERVNEAREELMRMLAEDELRDAVLLVFANKQDLPNAMNAAEITDKLGLHSLRHRNWYIQATCATSGDGLYEGLDWLSNQLRNQK.

G2 carries the N-myristoyl glycine lipid modification. Residues 3–16 (NMFANLFKGLFGKK) are important for the stable binding to the membranes. GTP is bound by residues 24–32 (GLDAAGKTT), 126–129 (NKQD), and A160.

It belongs to the small GTPase superfamily. Arf family.

It localises to the golgi apparatus membrane. It catalyses the reaction GTP + H2O = GDP + phosphate + H(+). With respect to regulation, alternates between an inactive GDP-bound form and an active GTP-bound form. Activated by a guanine nucleotide-exchange factor (GEF) and inactivated by GTPase-activating protein (GAP). In terms of biological role, small GTPase involved in protein trafficking between different compartments. Modulates vesicle budding and uncoating within the Golgi complex. In its GTP-bound form, triggers the recruitment of coatomer proteins to the Golgi membrane. The hydrolysis of ARF1-bound GTP, which is mediated by ARFGAPs proteins, is required for dissociation of coat proteins from Golgi membranes and vesicles. This chain is ADP-ribosylation factor 1 (arf1), found in Xenopus laevis (African clawed frog).